The chain runs to 208 residues: Protein-L-isoaspartate O-methyltransferase (208 aa).

Residue Ser59 is part of the active site.

This sequence belongs to the methyltransferase superfamily. L-isoaspartyl/D-aspartyl protein methyltransferase family.

Its subcellular location is the cytoplasm. The catalysed reaction is [protein]-L-isoaspartate + S-adenosyl-L-methionine = [protein]-L-isoaspartate alpha-methyl ester + S-adenosyl-L-homocysteine. Functionally, catalyzes the methyl esterification of L-isoaspartyl residues in peptides and proteins that result from spontaneous decomposition of normal L-aspartyl and L-asparaginyl residues. It plays a role in the repair and/or degradation of damaged proteins. This chain is Protein-L-isoaspartate O-methyltransferase, found in Serratia proteamaculans (strain 568).